A 262-amino-acid chain; its full sequence is Ribose-5-phosphate isomerase A (262 aa).

Residues 33–36, 89–92, and 102–105 each bind substrate; these read TGST, DGAD, and KGGG. Glu-111 serves as the catalytic Proton acceptor. Lys-129 provides a ligand contact to substrate.

It belongs to the ribose 5-phosphate isomerase family. In terms of assembly, homodimer.

The enzyme catalyses aldehydo-D-ribose 5-phosphate = D-ribulose 5-phosphate. It participates in carbohydrate degradation; pentose phosphate pathway; D-ribose 5-phosphate from D-ribulose 5-phosphate (non-oxidative stage): step 1/1. Functionally, catalyzes the reversible conversion of ribose-5-phosphate to ribulose 5-phosphate. This chain is Ribose-5-phosphate isomerase A, found in Cereibacter sphaeroides (strain ATCC 17029 / ATH 2.4.9) (Rhodobacter sphaeroides).